A 493-amino-acid polypeptide reads, in one-letter code: Glutamyl-tRNA(Gln) amidotransferase subunit A (493 aa).

Active-site charge relay system residues include K81 and S156. S180 serves as the catalytic Acyl-ester intermediate.

It belongs to the amidase family. GatA subfamily. In terms of assembly, heterotrimer of A, B and C subunits.

The catalysed reaction is L-glutamyl-tRNA(Gln) + L-glutamine + ATP + H2O = L-glutaminyl-tRNA(Gln) + L-glutamate + ADP + phosphate + H(+). Functionally, allows the formation of correctly charged Gln-tRNA(Gln) through the transamidation of misacylated Glu-tRNA(Gln) in organisms which lack glutaminyl-tRNA synthetase. The reaction takes place in the presence of glutamine and ATP through an activated gamma-phospho-Glu-tRNA(Gln). In Mycobacterium avium (strain 104), this protein is Glutamyl-tRNA(Gln) amidotransferase subunit A.